The primary structure comprises 693 residues: Elongation factor G (693 aa).

The tr-type G domain maps to 8–282; it reads EKTRNIGIMA…AVIDYLPSPL (275 aa). GTP-binding positions include 17–24, 81–85, and 135–138; these read AHVDAGKT, DTPGH, and NKMD.

The protein belongs to the TRAFAC class translation factor GTPase superfamily. Classic translation factor GTPase family. EF-G/EF-2 subfamily.

Its subcellular location is the cytoplasm. Its function is as follows. Catalyzes the GTP-dependent ribosomal translocation step during translation elongation. During this step, the ribosome changes from the pre-translocational (PRE) to the post-translocational (POST) state as the newly formed A-site-bound peptidyl-tRNA and P-site-bound deacylated tRNA move to the P and E sites, respectively. Catalyzes the coordinated movement of the two tRNA molecules, the mRNA and conformational changes in the ribosome. The chain is Elongation factor G from Streptococcus pneumoniae (strain Hungary19A-6).